The sequence spans 642 residues: Threonine--tRNA ligase (642 aa).

In terms of domain architecture, TGS spans 1-61 (MPVIRFYDGS…REDAFIEFVD (61 aa)). The segment at 243-534 (DHRKIGKFLQ…LIEECSGNLP (292 aa)) is catalytic. Residues cysteine 334, histidine 385, and histidine 511 each contribute to the Zn(2+) site.

It belongs to the class-II aminoacyl-tRNA synthetase family. Homodimer. The cofactor is Zn(2+).

Its subcellular location is the cytoplasm. It catalyses the reaction tRNA(Thr) + L-threonine + ATP = L-threonyl-tRNA(Thr) + AMP + diphosphate + H(+). In terms of biological role, catalyzes the attachment of threonine to tRNA(Thr) in a two-step reaction: L-threonine is first activated by ATP to form Thr-AMP and then transferred to the acceptor end of tRNA(Thr). Also edits incorrectly charged L-seryl-tRNA(Thr). The polypeptide is Threonine--tRNA ligase (Buchnera aphidicola subsp. Acyrthosiphon pisum (strain 5A)).